A 513-amino-acid polypeptide reads, in one-letter code: MNEEQRKSTSIDILAERDKKTKDYSKYFEHVYQPPSLKEARKRGKEEVNYNDDFQIDEKYRNMGQGKTFLIKTYGCQMNAHDTEVMAGILGALGYTPTEDINHADVILINTCAIRENAENKVFSEIGNLKHLKKEKPETVIGVCGCMSQEESVVNKILKSYQNVDMIFGTHNIHRLPEILEEAYLSKAMVVEVWSKEGDVIENLPKVREGNIKAWVNIMYGCDKFCTYCIVPFTRGKERSRRPEDIIDEVRDLARQGYKEITLLGQNVNAYGKDIDGLAYGLGDLLEDISKIDIPRVRFTTSHPWDFTDRMIEVIANGGNIVPHVHLPVQSGNNAVLKIMGRKYTRESYLDLVNRIKTHIPNVALTTDIIVGYPNETDEQFEETLTLYDEVEFEHAYTYIYSQRDGTPAAKMNDNVPLDVKKDRLQQLNKKVACYSERAMQQYEGQTVQVLCEGVSKKDDTVLSGYTSKNKLVNFKAPKSMIGKIVNVYIDEAKQFSLNGTFISVNDKTVVTQ.

Positions 67–185 (KTFLIKTYGC…LPEILEEAYL (119 aa)) constitute an MTTase N-terminal domain. Residues Cys-76, Cys-112, Cys-146, Cys-222, Cys-226, and Cys-229 each contribute to the [4Fe-4S] cluster site. One can recognise a Radical SAM core domain in the interval 208–438 (REGNIKAWVN…NKKVACYSER (231 aa)). A TRAM domain is found at 441 to 504 (QQYEGQTVQV…QFSLNGTFIS (64 aa)).

It belongs to the methylthiotransferase family. MiaB subfamily. Monomer. [4Fe-4S] cluster serves as cofactor.

It is found in the cytoplasm. The enzyme catalyses N(6)-dimethylallyladenosine(37) in tRNA + (sulfur carrier)-SH + AH2 + 2 S-adenosyl-L-methionine = 2-methylsulfanyl-N(6)-dimethylallyladenosine(37) in tRNA + (sulfur carrier)-H + 5'-deoxyadenosine + L-methionine + A + S-adenosyl-L-homocysteine + 2 H(+). Functionally, catalyzes the methylthiolation of N6-(dimethylallyl)adenosine (i(6)A), leading to the formation of 2-methylthio-N6-(dimethylallyl)adenosine (ms(2)i(6)A) at position 37 in tRNAs that read codons beginning with uridine. The chain is tRNA-2-methylthio-N(6)-dimethylallyladenosine synthase from Staphylococcus saprophyticus subsp. saprophyticus (strain ATCC 15305 / DSM 20229 / NCIMB 8711 / NCTC 7292 / S-41).